A 230-amino-acid chain; its full sequence is Large ribosomal subunit protein uL1 (230 aa).

It belongs to the universal ribosomal protein uL1 family. In terms of assembly, part of the 50S ribosomal subunit.

Binds directly to 23S rRNA. The L1 stalk is quite mobile in the ribosome, and is involved in E site tRNA release. Functionally, protein L1 is also a translational repressor protein, it controls the translation of the L11 operon by binding to its mRNA. This chain is Large ribosomal subunit protein uL1, found in Bifidobacterium adolescentis (strain ATCC 15703 / DSM 20083 / NCTC 11814 / E194a).